The following is a 239-amino-acid chain: tRNA (guanine-N(7)-)-methyltransferase (239 aa).

Residues E69, E94, D121, and D144 each coordinate S-adenosyl-L-methionine. D144 is an active-site residue. K148 is a substrate binding site. The interaction with RNA stretch occupies residues 150–155 (RHNKRR). Substrate-binding positions include D180 and 217 to 220 (TKFE).

The protein belongs to the class I-like SAM-binding methyltransferase superfamily. TrmB family. Monomer.

The catalysed reaction is guanosine(46) in tRNA + S-adenosyl-L-methionine = N(7)-methylguanosine(46) in tRNA + S-adenosyl-L-homocysteine. The protein operates within tRNA modification; N(7)-methylguanine-tRNA biosynthesis. Functionally, catalyzes the formation of N(7)-methylguanine at position 46 (m7G46) in tRNA. This chain is tRNA (guanine-N(7)-)-methyltransferase, found in Salmonella typhimurium (strain LT2 / SGSC1412 / ATCC 700720).